The primary structure comprises 226 residues: Small ribosomal subunit protein uS5 (226 aa).

Positions 1-71 (MEDIKHNKKP…RKNEKRTKSE (71 aa)) are disordered. Low complexity predominate over residues 24 to 54 (ANPQANHANPNNRSASVNNNSVNNNKKNSSR). One can recognise an S5 DRBM domain in the interval 72-135 (FEEKIVKISR…KMAENNVQKI (64 aa)).

This sequence belongs to the universal ribosomal protein uS5 family. In terms of assembly, part of the 30S ribosomal subunit. Contacts proteins S4 and S8.

Functionally, with S4 and S12 plays an important role in translational accuracy. Its function is as follows. Located at the back of the 30S subunit body where it stabilizes the conformation of the head with respect to the body. In Mycoplasmoides gallisepticum (strain R(low / passage 15 / clone 2)) (Mycoplasma gallisepticum), this protein is Small ribosomal subunit protein uS5.